The chain runs to 300 residues: Auxin-responsive protein IAA7 (300 aa).

Disordered regions lie at residues M1–K80 and V92–N125. The EAR-like (transcriptional repression) motif lies at L43–L47. Polar residues predominate over residues V92 to K103. The region spanning A177 to T281 is the PB1 domain.

It belongs to the Aux/IAA family. Homodimers and heterodimers. Expressed at low levels in roots and shoots.

The protein resides in the nucleus. In terms of biological role, aux/IAA proteins are short-lived transcriptional factors that function as repressors of early auxin response genes at low auxin concentrations. The polypeptide is Auxin-responsive protein IAA7 (IAA7) (Oryza sativa subsp. japonica (Rice)).